The following is a 292-amino-acid chain: Pyridoxal 5'-phosphate synthase subunit PdxS (292 aa).

Asp-22 provides a ligand contact to D-ribose 5-phosphate. Lys-79 serves as the catalytic Schiff-base intermediate with D-ribose 5-phosphate. D-ribose 5-phosphate is bound at residue Gly-151. Position 163 (Arg-163) interacts with D-glyceraldehyde 3-phosphate. Residues Gly-212 and 233 to 234 (GS) contribute to the D-ribose 5-phosphate site.

Belongs to the PdxS/SNZ family. As to quaternary structure, in the presence of PdxT, forms a dodecamer of heterodimers.

It catalyses the reaction aldehydo-D-ribose 5-phosphate + D-glyceraldehyde 3-phosphate + L-glutamine = pyridoxal 5'-phosphate + L-glutamate + phosphate + 3 H2O + H(+). The protein operates within cofactor biosynthesis; pyridoxal 5'-phosphate biosynthesis. In terms of biological role, catalyzes the formation of pyridoxal 5'-phosphate from ribose 5-phosphate (RBP), glyceraldehyde 3-phosphate (G3P) and ammonia. The ammonia is provided by the PdxT subunit. Can also use ribulose 5-phosphate and dihydroxyacetone phosphate as substrates, resulting from enzyme-catalyzed isomerization of RBP and G3P, respectively. This is Pyridoxal 5'-phosphate synthase subunit PdxS from Thermoanaerobacter sp. (strain X514).